Here is a 354-residue protein sequence, read N- to C-terminus: Guanine nucleotide-binding protein G(i) subunit alpha-1 (354 aa).

The N-myristoyl glycine moiety is linked to residue Gly2. The S-palmitoyl cysteine moiety is linked to residue Cys3. The 323-residue stretch at 32-354 folds into the G-alpha domain; sequence REVKLLLLGA…KNNLKDCGLF (323 aa). Residues 35–48 form a G1 motif region; that stretch reads KLLLLGAGESGKST. Residues 43-48, 150-151, and 175-178 each bind GTP; these read ESGKST, DS, and LRTR. Ser47 contributes to the Mg(2+) binding site. Residues 173–181 are G2 motif; it reads DVLRTRVKT. Residue Thr181 coordinates Mg(2+). Residues 196–205 are G3 motif; that stretch reads FKMFDVGGQR. GTP is bound by residues 200–204, 269–272, and Ala326; these read DVGGQ and NKKD. The tract at residues 265–272 is G4 motif; it reads ILFLNKKD. Residues 324–329 form a G5 motif region; that stretch reads TCATDT.

This sequence belongs to the G-alpha family. G(i/o/t/z) subfamily. As to quaternary structure, heterotrimeric G proteins are composed of 3 units; alpha, beta and gamma. The alpha chain contains the guanine nucleotide binding site. Part of a spindle orientation complex. Identified in complex with the beta subunit GNB1 and the gamma subunit GNG1. Identified in complex with the beta subunit GNB1 and the gamma subunit GNG2. GTP binding causes dissociation of the heterotrimer, liberating the individual subunits so that they can interact with downstream effector proteins. Post-translationally, myristoylation at Gly-2 is required for membrane anchoring before palmitoylation. In terms of processing, palmitoylation at Cys-3 varies with membrane lipid composition.

It localises to the nucleus. Its subcellular location is the cytoplasm. It is found in the cell membrane. The protein resides in the cytoskeleton. The protein localises to the microtubule organizing center. It localises to the centrosome. Its subcellular location is the cell cortex. It is found in the membrane. The enzyme catalyses GTP + H2O = GDP + phosphate + H(+). Functionally, guanine nucleotide-binding proteins (G proteins) function as transducers downstream of G protein-coupled receptors (GPCRs) in numerous signaling cascades. The alpha chain contains the guanine nucleotide binding site and alternates between an active, GTP-bound state and an inactive, GDP-bound state. Signaling by an activated GPCR promotes GDP release and GTP binding. The alpha subunit has a low GTPase activity that converts bound GTP to GDP, thereby terminating the signal. Both GDP release and GTP hydrolysis are modulated by numerous regulatory proteins. Signaling is mediated via effector proteins, such as adenylate cyclase. Inhibits adenylate cyclase activity, leading to decreased intracellular cAMP levels. Required for cortical dynein-dynactin complex recruitment during metaphase. This Xenopus laevis (African clawed frog) protein is Guanine nucleotide-binding protein G(i) subunit alpha-1 (gnai1).